We begin with the raw amino-acid sequence, 1070 residues long: DNA-directed RNA polymerase subunit beta (1070 aa).

This sequence belongs to the RNA polymerase beta chain family. As to quaternary structure, in plastids the minimal PEP RNA polymerase catalytic core is composed of four subunits: alpha, beta, beta', and beta''. When a (nuclear-encoded) sigma factor is associated with the core the holoenzyme is formed, which can initiate transcription.

The protein resides in the plastid. It is found in the chloroplast. The catalysed reaction is RNA(n) + a ribonucleoside 5'-triphosphate = RNA(n+1) + diphosphate. Functionally, DNA-dependent RNA polymerase catalyzes the transcription of DNA into RNA using the four ribonucleoside triphosphates as substrates. This is DNA-directed RNA polymerase subunit beta from Dioscorea elephantipes (Elephant's foot yam).